We begin with the raw amino-acid sequence, 61 residues long: Protein stunted (61 aa).

The tract at residues 3–15 (AWRAAGITYIQYS) is sufficient for mth activation.

Belongs to the eukaryotic ATPase epsilon family.

Functionally, activates the G-protein coupled receptor mth in vitro, leading to increased intracellular calcium ion levels. In Drosophila melanogaster (Fruit fly), this protein is Protein stunted.